The primary structure comprises 125 residues: Large ribosomal subunit protein bL12 (125 aa).

It belongs to the bacterial ribosomal protein bL12 family. As to quaternary structure, homodimer. Part of the ribosomal stalk of the 50S ribosomal subunit. Forms a multimeric L10(L12)X complex, where L10 forms an elongated spine to which 2 to 4 L12 dimers bind in a sequential fashion. Binds GTP-bound translation factors.

Forms part of the ribosomal stalk which helps the ribosome interact with GTP-bound translation factors. Is thus essential for accurate translation. The sequence is that of Large ribosomal subunit protein bL12 from Methylibium petroleiphilum (strain ATCC BAA-1232 / LMG 22953 / PM1).